The following is a 328-amino-acid chain: Tetraacyldisaccharide 4'-kinase (328 aa).

55-62 (TAGGNGKT) serves as a coordination point for ATP.

The protein belongs to the LpxK family.

The catalysed reaction is a lipid A disaccharide + ATP = a lipid IVA + ADP + H(+). It participates in glycolipid biosynthesis; lipid IV(A) biosynthesis; lipid IV(A) from (3R)-3-hydroxytetradecanoyl-[acyl-carrier-protein] and UDP-N-acetyl-alpha-D-glucosamine: step 6/6. Transfers the gamma-phosphate of ATP to the 4'-position of a tetraacyldisaccharide 1-phosphate intermediate (termed DS-1-P) to form tetraacyldisaccharide 1,4'-bis-phosphate (lipid IVA). In Escherichia coli O6:K15:H31 (strain 536 / UPEC), this protein is Tetraacyldisaccharide 4'-kinase.